The sequence spans 95 residues: Protein TusB (95 aa).

It belongs to the DsrH/TusB family. As to quaternary structure, heterohexamer, formed by a dimer of trimers. The hexameric TusBCD complex contains 2 copies each of TusB, TusC and TusD. The TusBCD complex interacts with TusE.

It localises to the cytoplasm. Part of a sulfur-relay system required for 2-thiolation of 5-methylaminomethyl-2-thiouridine (mnm(5)s(2)U) at tRNA wobble positions. In Serratia proteamaculans (strain 568), this protein is Protein TusB.